The following is a 396-amino-acid chain: Multidrug efflux protein YfmO (396 aa).

Transmembrane regions (helical) follow at residues 20–40 (VWAV…VDPI), 56–76 (SLLF…SGAI), 80–100 (IGAK…AGLG), 114–134 (GGWG…IVGV), 142–162 (AIIL…LAGG), 171–191 (APFF…SFML), 214–234 (GLLT…ILLA), 249–269 (YVFF…APLV), 278–298 (SLVV…IWTD), 301–321 (TLII…NTIM), 339–359 (AYSS…GMLS), and 364–384 (ASTP…VLLM).

The protein belongs to the major facilitator superfamily.

It localises to the cell membrane. In terms of biological role, acts to efflux copper or a copper complex. It is possible that YfmO could contribute to copper resistance. In Bacillus subtilis (strain 168), this protein is Multidrug efflux protein YfmO (yfmO).